Consider the following 282-residue polypeptide: ATP phosphoribosyltransferase (282 aa).

The protein belongs to the ATP phosphoribosyltransferase family. Long subfamily. It depends on Mg(2+) as a cofactor.

It is found in the cytoplasm. The enzyme catalyses 1-(5-phospho-beta-D-ribosyl)-ATP + diphosphate = 5-phospho-alpha-D-ribose 1-diphosphate + ATP. Its pathway is amino-acid biosynthesis; L-histidine biosynthesis; L-histidine from 5-phospho-alpha-D-ribose 1-diphosphate: step 1/9. With respect to regulation, feedback inhibited by histidine. Its function is as follows. Catalyzes the condensation of ATP and 5-phosphoribose 1-diphosphate to form N'-(5'-phosphoribosyl)-ATP (PR-ATP). Has a crucial role in the pathway because the rate of histidine biosynthesis seems to be controlled primarily by regulation of HisG enzymatic activity. In Haloarcula marismortui (strain ATCC 43049 / DSM 3752 / JCM 8966 / VKM B-1809) (Halobacterium marismortui), this protein is ATP phosphoribosyltransferase.